We begin with the raw amino-acid sequence, 35 residues long: Photosystem II reaction center protein T (35 aa).

Residues 3 to 23 traverse the membrane as a helical segment; the sequence is ALVYTFLLXSTLGIIFFAIFF.

This sequence belongs to the PsbT family. As to quaternary structure, PSII is composed of 1 copy each of membrane proteins PsbA, PsbB, PsbC, PsbD, PsbE, PsbF, PsbH, PsbI, PsbJ, PsbK, PsbL, PsbM, PsbT, PsbY, PsbZ, Psb30/Ycf12, at least 3 peripheral proteins of the oxygen-evolving complex and a large number of cofactors. It forms dimeric complexes.

The protein localises to the plastid. Its subcellular location is the chloroplast thylakoid membrane. Found at the monomer-monomer interface of the photosystem II (PS II) dimer, plays a role in assembly and dimerization of PSII. PSII is a light-driven water plastoquinone oxidoreductase, using light energy to abstract electrons from H(2)O, generating a proton gradient subsequently used for ATP formation. This Cunninghamia lanceolata (China fir) protein is Photosystem II reaction center protein T.